The primary structure comprises 440 residues: Chromosome partition protein MukF (440 aa).

Residues 208–236 (LSETSGTLRELQDTLEAAGDKLQANLLRI) are leucine-zipper.

This sequence belongs to the MukF family. As to quaternary structure, interacts, and probably forms a ternary complex, with MukE and MukB via its C-terminal region. The complex formation is stimulated by calcium or magnesium. It is required for an interaction between MukE and MukB.

The protein localises to the cytoplasm. It localises to the nucleoid. Involved in chromosome condensation, segregation and cell cycle progression. May participate in facilitating chromosome segregation by condensation DNA from both sides of a centrally located replisome during cell division. Not required for mini-F plasmid partitioning. Probably acts via its interaction with MukB and MukE. Overexpression results in anucleate cells. It has a calcium binding activity. The chain is Chromosome partition protein MukF from Escherichia coli O17:K52:H18 (strain UMN026 / ExPEC).